The chain runs to 284 residues: Phosphatidylglycerol--prolipoprotein diacylglyceryl transferase (284 aa).

Helical transmembrane passes span 21-41, 62-82, 106-126, 136-156, 190-210, 218-238, and 252-272; these read IEVH…FYMA, YFLW…ILIY, FVGI…IASY, LLIY…FGRI, PSQL…VMWA, GLLI…AEFY, and LSMG…ILLY. Residue arginine 155 participates in a 1,2-diacyl-sn-glycero-3-phospho-(1'-sn-glycerol) binding.

It belongs to the Lgt family.

The protein resides in the cell inner membrane. It carries out the reaction L-cysteinyl-[prolipoprotein] + a 1,2-diacyl-sn-glycero-3-phospho-(1'-sn-glycerol) = an S-1,2-diacyl-sn-glyceryl-L-cysteinyl-[prolipoprotein] + sn-glycerol 1-phosphate + H(+). Its pathway is protein modification; lipoprotein biosynthesis (diacylglyceryl transfer). Functionally, catalyzes the transfer of the diacylglyceryl group from phosphatidylglycerol to the sulfhydryl group of the N-terminal cysteine of a prolipoprotein, the first step in the formation of mature lipoproteins. The protein is Phosphatidylglycerol--prolipoprotein diacylglyceryl transferase of Helicobacter pylori (strain P12).